We begin with the raw amino-acid sequence, 456 residues long: Enolase (456 aa).

Position 164 (Gln164) interacts with (2R)-2-phosphoglycerate. The active-site Proton donor is Glu207. Residues Asp244, Glu287, and Asp314 each coordinate Mg(2+). Residues Lys339, Arg368, Ser369, and Lys390 each coordinate (2R)-2-phosphoglycerate. The Proton acceptor role is filled by Lys339.

It belongs to the enolase family. As to quaternary structure, component of the RNA degradosome, a multiprotein complex involved in RNA processing and mRNA degradation. The cofactor is Mg(2+).

Its subcellular location is the cytoplasm. The protein localises to the secreted. The protein resides in the cell surface. The catalysed reaction is (2R)-2-phosphoglycerate = phosphoenolpyruvate + H2O. The protein operates within carbohydrate degradation; glycolysis; pyruvate from D-glyceraldehyde 3-phosphate: step 4/5. Catalyzes the reversible conversion of 2-phosphoglycerate (2-PG) into phosphoenolpyruvate (PEP). It is essential for the degradation of carbohydrates via glycolysis. The polypeptide is Enolase (Francisella tularensis subsp. holarctica (strain OSU18)).